Here is a 210-residue protein sequence, read N- to C-terminus: Large ribosomal subunit protein uL3 (210 aa).

The protein belongs to the universal ribosomal protein uL3 family. As to quaternary structure, part of the 50S ribosomal subunit. Forms a cluster with proteins L14 and L19.

In terms of biological role, one of the primary rRNA binding proteins, it binds directly near the 3'-end of the 23S rRNA, where it nucleates assembly of the 50S subunit. The polypeptide is Large ribosomal subunit protein uL3 (Lawsonia intracellularis (strain PHE/MN1-00)).